Here is a 548-residue protein sequence, read N- to C-terminus: uncharacterized protein (548 aa).

The DhaL domain maps to 8 to 200; the sequence is KLFADMIIQG…LLCVYEGFLK (193 aa).

This is an uncharacterized protein from Staphylococcus aureus (strain MRSA252).